A 236-amino-acid polypeptide reads, in one-letter code: Ras-related protein RabY (236 aa).

18 to 25 provides a ligand contact to GTP; it reads GDRKTGKT. The short motif at 40–48 is the Effector region element; the sequence is YRQTNLLHF. GTP contacts are provided by residues 66–70 and 126–129; these read DSQAD and NKSD. Over residues 192–225 the composition is skewed to low complexity; the sequence is QQQQQQQQQQQQQQQQQQQQQQQQQQQQQQQHQQ. Residues 192 to 236 form a disordered region; sequence QQQQQQQQQQQQQQQQQQQQQQQQQQQQQQQHQQSSKTKIGCLIQ. Cys233 bears the Cysteine methyl ester mark. A lipid anchor (S-geranylgeranyl cysteine) is attached at Cys233. A propeptide spans 234-236 (removed in mature form); it reads LIQ.

This sequence belongs to the small GTPase superfamily. Rab family.

It is found in the cell membrane. This is Ras-related protein RabY (rabY) from Dictyostelium discoideum (Social amoeba).